The sequence spans 128 residues: Large ribosomal subunit protein bL12c (128 aa).

A disordered region spans residues 103 to 128 (QEGLGKDAAEDAKKQIEDAGGKVSLT). Over residues 106–122 (LGKDAAEDAKKQIEDAG) the composition is skewed to basic and acidic residues.

The protein belongs to the bacterial ribosomal protein bL12 family. Homodimer. Part of the ribosomal stalk of the 50S ribosomal subunit. Forms a multimeric L10(L12)X complex, where L10 forms an elongated spine to which 2 to 4 L12 dimers bind in a sequential fashion. Binds GTP-bound translation factors.

The protein localises to the plastid. The protein resides in the chloroplast. In terms of biological role, forms part of the ribosomal stalk which helps the ribosome interact with GTP-bound translation factors. Is thus essential for accurate translation. The protein is Large ribosomal subunit protein bL12c of Thalassiosira pseudonana (Marine diatom).